The chain runs to 184 residues: Photosystem I assembly protein Ycf4 (184 aa).

The next 2 helical transmembrane spans lie at 21–43 (NFCWAFILLFGALGFFFVGFSSY) and 58–80 (LFIPQGIVMCFYGIAGLFISFYL).

Belongs to the Ycf4 family.

It localises to the plastid. Its subcellular location is the chloroplast thylakoid membrane. In terms of biological role, seems to be required for the assembly of the photosystem I complex. The sequence is that of Photosystem I assembly protein Ycf4 from Marchantia polymorpha (Common liverwort).